Consider the following 539-residue polypeptide: uncharacterized protein (539 aa).

It belongs to the transposase 25 family.

This is an uncharacterized protein from Sinorhizobium fredii (strain NBRC 101917 / NGR234).